We begin with the raw amino-acid sequence, 162 residues long: Cytochrome c-type biogenesis protein CcmE (162 aa).

Residues 1 to 7 (MTRKQRR) lie on the Cytoplasmic side of the membrane. A helical; Signal-anchor for type II membrane protein transmembrane segment spans residues 8–28 (LTMIGGALVVLGIAAALVLNA). Residues 29-162 (LRDSIVFFST…EASSKQEVSQ (134 aa)) lie on the Periplasmic side of the membrane. Heme contacts are provided by His-122 and Tyr-126. The tract at residues 140–162 (HWKDDYGAQPGAAEASSKQEVSQ) is disordered.

It belongs to the CcmE/CycJ family.

Its subcellular location is the cell inner membrane. Functionally, heme chaperone required for the biogenesis of c-type cytochromes. Transiently binds heme delivered by CcmC and transfers the heme to apo-cytochromes in a process facilitated by CcmF and CcmH. The protein is Cytochrome c-type biogenesis protein CcmE of Nitrobacter winogradskyi (strain ATCC 25391 / DSM 10237 / CIP 104748 / NCIMB 11846 / Nb-255).